The following is a 432-amino-acid chain: Amino-acid acetyltransferase (432 aa).

One can recognise an N-acetyltransferase domain in the interval 286–425 (ELVREAAIED…ASLYNYQRNS (140 aa)).

This sequence belongs to the acetyltransferase family. ArgA subfamily.

It is found in the cytoplasm. It carries out the reaction L-glutamate + acetyl-CoA = N-acetyl-L-glutamate + CoA + H(+). Its pathway is amino-acid biosynthesis; L-arginine biosynthesis; N(2)-acetyl-L-ornithine from L-glutamate: step 1/4. The chain is Amino-acid acetyltransferase from Pseudomonas fluorescens (strain Pf0-1).